We begin with the raw amino-acid sequence, 353 residues long: Fe(3+) ions import ATP-binding protein FbpC (353 aa).

The 231-residue stretch at 9–239 (VTFQNVRKSF…PASSFIADFM (231 aa)) folds into the ABC transporter domain. 41–48 (GPSGCGKT) is an ATP binding site.

It belongs to the ABC transporter superfamily. Fe(3+) ion importer (TC 3.A.1.10) family. The complex is composed of two ATP-binding proteins (FbpC), two transmembrane proteins (FbpB) and a solute-binding protein (FbpA).

Its subcellular location is the cell inner membrane. The enzyme catalyses Fe(3+)(out) + ATP + H2O = Fe(3+)(in) + ADP + phosphate + H(+). Functionally, part of the ABC transporter complex FbpABC involved in Fe(3+) ions import. Responsible for energy coupling to the transport system. This chain is Fe(3+) ions import ATP-binding protein FbpC, found in Rhizobium etli (strain ATCC 51251 / DSM 11541 / JCM 21823 / NBRC 15573 / CFN 42).